A 238-amino-acid chain; its full sequence is Splicing regulator RBM11 (238 aa).

The region spanning 10 to 87 (RTVFVGNLEA…RPINVQYRFG (78 aa)) is the RRM domain. Positions 172-238 (ALNHSPGPEA…CRKCKKKKRY (67 aa)) are disordered. The Bipartite nuclear localization signal motif lies at 202–237 (NKRKRQRPDSDSDSSSEDKRGNEGSQKCRKCKKKKR). Basic residues predominate over residues 228–238 (KCRKCKKKKRY).

In terms of assembly, homodimer. As to expression, selectively expressed in brain, cerebellum and testis, and to a lower extent in kidney.

The protein localises to the nucleus. The protein resides in the nucleoplasm. Its subcellular location is the nucleus speckle. Functionally, tissue-specific splicing factor with potential implication in the regulation of alternative splicing during neuron and germ cell differentiation. Antagonizes SRSF1-mediated BCL-X splicing. May affect the choice of alternative 5' splice sites by binding to specific sequences in exons and antagonizing the SR protein SRSF1. In Mus musculus (Mouse), this protein is Splicing regulator RBM11 (Rbm11).